Consider the following 293-residue polypeptide: MEVIEGKMPFMGYETYYRIVGRRSEKTPLVLLHGGPGSSHNYFEVLDKLAEIDNRRIIMYDQLGCGKSSIPDDHPELYTKETWVKELMALREHLALRKIHLLGQSWGGMLALIYMCDYHPVGIQSLILSSTLSSASLWSKELHRMIKYLPIEEQAAIHRAELTSNFNDPDYLKANEHFMNQHAIDMTKTWPECVMRKKCGGIVAYETAWGPNEYTPEGNLHDYEYTEKLGKIKIPTLITSGTDDLCTPYVAKTMQDHLAGSKWQLFENCGHMSFVEKTDEYVEMLRKWLDQHD.

In terms of domain architecture, AB hydrolase-1 spans 28-277 (PLVLLHGGPG…NCGHMSFVEK (250 aa)). Residue Ser105 is the Nucleophile of the active site. Asp244 is an active-site residue. His271 (proton donor) is an active-site residue.

Belongs to the peptidase S33 family.

It localises to the cell envelope. It carries out the reaction Release of N-terminal proline from a peptide.. In terms of biological role, releases the N-terminal proline from various substrates. The polypeptide is Proline iminopeptidase (Lactobacillus crispatus (strain ST1)).